The following is an 888-amino-acid chain: Protein sey1 (888 aa).

Residues 1 to 24 (MDMATSNINGHGDRPSPAARFPTA) are disordered. Residues 1–771 (MDMATSNING…KRSAIGGVAQ (771 aa)) lie on the Cytoplasmic side of the membrane. Residues 76-315 (GFNYHLISVF…FEGGVFLPEY (240 aa)) enclose the GB1/RHD3-type G domain. Position 86–93 (86–93 (GSQSTGKS)) interacts with GTP. Residues 703–723 (GNTPASVDPKDEEDLTPIGGV) are disordered. The segment covering 712–723 (KDEEDLTPIGGV) has biased composition (acidic residues). Residues 724-745 (DEEEGKSLEEEMTVLSEAKRQD) adopt a coiled-coil conformation. A helical membrane pass occupies residues 772–792 (VPLYFYGLLLALGWNEIVAVL). Over 793-795 (RNP) the chain is Lumenal. The helical transmembrane segment at 796–816 (IYFVFLILCGVAGYVTYTLNL) threads the bilayer. At 817-888 (WGPIIRMLNA…VREDEDVDEI (72 aa)) the chain is on the cytoplasmic side.

The protein belongs to the TRAFAC class dynamin-like GTPase superfamily. GB1/RHD3 GTPase family. RHD3 subfamily.

It is found in the endoplasmic reticulum membrane. Its function is as follows. Cooperates with the reticulon proteins and tubule-shaping DP1 family proteins to generate and maintain the structure of the tubular endoplasmic reticulum network. Has GTPase activity, which is required for its function in ER organization. The protein is Protein sey1 (sey1) of Sclerotinia sclerotiorum (strain ATCC 18683 / 1980 / Ss-1) (White mold).